Consider the following 494-residue polypeptide: Truncated non-functional calcium-binding mitochondrial carrier SAL1-1 (494 aa).

Positions 11–46 (QRDIRYACLFKELDVKGNGQVTLDNLISAFEKNDHP) constitute an EF-hand 1 domain. Ca(2+)-binding residues include K65, D70, D93, D95, D97, K99, and E104. 3 EF-hand domains span residues 80–115 (NAESQIWNGFQRIDLDHDGKIGINEINRYLSDLDNQ), 120–155 (NELNHELSNEKVNKFSRFFEWAFPKRKANIALRGQA), and 156–191 (SHKKNTDNDRSKKTTDSDLYVTYDQWRDFLLLVPRK). Residues T161 and S166 each contribute to the Ca(2+) site. Solcar repeat units lie at residues 225-332 (IRGF…TKKI) and 345-434 (LSKF…LKKM). 5 consecutive transmembrane segments (helical) span residues 231–248 (FIAGGISGVISRTCTAPF), 307–326 (GNGLNVIKVFPESSIKFGSF), 355–368 (GLAGMAAQFSVYPI), 409–428 (RCHSRYSGHISLCCIRFGDF), and 458–475 (TSNGCIQWNCRSFCCLSN). One copy of the Solcar 3; truncated repeat lies at 452–494 (SKQPGCTSNGCIQWNCRSFCCLSNQSFKNKTTSPRNICTSLCV).

This sequence belongs to the mitochondrial carrier (TC 2.A.29) family.

It localises to the mitochondrion inner membrane. In terms of biological role, calcium-dependent mitochondrial solute carrier. The chain is Truncated non-functional calcium-binding mitochondrial carrier SAL1-1 (SAL1) from Saccharomyces cerevisiae (strain ATCC 204508 / S288c) (Baker's yeast).